We begin with the raw amino-acid sequence, 478 residues long: ATP synthase subunit beta (478 aa).

161–168 (GGAGVGKT) serves as a coordination point for ATP.

The protein belongs to the ATPase alpha/beta chains family. As to quaternary structure, F-type ATPases have 2 components, CF(1) - the catalytic core - and CF(0) - the membrane proton channel. CF(1) has five subunits: alpha(3), beta(3), gamma(1), delta(1), epsilon(1). CF(0) has four main subunits: a(1), b(1), b'(1) and c(9-12).

The protein localises to the cell inner membrane. The enzyme catalyses ATP + H2O + 4 H(+)(in) = ADP + phosphate + 5 H(+)(out). In terms of biological role, produces ATP from ADP in the presence of a proton gradient across the membrane. The catalytic sites are hosted primarily by the beta subunits. The protein is ATP synthase subunit beta of Gloeobacter violaceus (strain ATCC 29082 / PCC 7421).